We begin with the raw amino-acid sequence, 380 residues long: Cytochrome b (380 aa).

The next 4 helical transmembrane spans lie at 34–54 (FGSL…LLAM), 78–99 (WLIR…YLHI), 114–134 (WNTG…GYVL), and 179–199 (FFAL…IHLT). Heme b is bound by residues histidine 84 and histidine 98. Heme b is bound by residues histidine 183 and histidine 197. Histidine 202 contacts a ubiquinone. 4 helical membrane-spanning segments follow: residues 227–247 (LKDI…ALFS), 289–309 (LGGV…PLLH), 321–341 (LSQL…WIGS), and 348–368 (FIII…ILFP).

This sequence belongs to the cytochrome b family. The cytochrome bc1 complex contains 11 subunits: 3 respiratory subunits (MT-CYB, CYC1 and UQCRFS1), 2 core proteins (UQCRC1 and UQCRC2) and 6 low-molecular weight proteins (UQCRH/QCR6, UQCRB/QCR7, UQCRQ/QCR8, UQCR10/QCR9, UQCR11/QCR10 and a cleavage product of UQCRFS1). This cytochrome bc1 complex then forms a dimer. Heme b serves as cofactor.

Its subcellular location is the mitochondrion inner membrane. Its function is as follows. Component of the ubiquinol-cytochrome c reductase complex (complex III or cytochrome b-c1 complex) that is part of the mitochondrial respiratory chain. The b-c1 complex mediates electron transfer from ubiquinol to cytochrome c. Contributes to the generation of a proton gradient across the mitochondrial membrane that is then used for ATP synthesis. The sequence is that of Cytochrome b (MT-CYB) from Oceanodroma microsoma (Least storm petrel).